Here is a 110-residue protein sequence, read N- to C-terminus: Hydrogenase maturation factor HypA (110 aa).

Histidine 2 lines the Ni(2+) pocket. Residues cysteine 70, cysteine 73, cysteine 86, and cysteine 89 each coordinate Zn(2+).

It belongs to the HypA/HybF family.

Functionally, involved in the maturation of [NiFe] hydrogenases. Required for nickel insertion into the metal center of the hydrogenase. This Geobacter metallireducens (strain ATCC 53774 / DSM 7210 / GS-15) protein is Hydrogenase maturation factor HypA.